The following is a 477-amino-acid chain: Aspartyl/glutamyl-tRNA(Asn/Gln) amidotransferase subunit B (477 aa).

It belongs to the GatB/GatE family. GatB subfamily. Heterotrimer of A, B and C subunits.

The enzyme catalyses L-glutamyl-tRNA(Gln) + L-glutamine + ATP + H2O = L-glutaminyl-tRNA(Gln) + L-glutamate + ADP + phosphate + H(+). It catalyses the reaction L-aspartyl-tRNA(Asn) + L-glutamine + ATP + H2O = L-asparaginyl-tRNA(Asn) + L-glutamate + ADP + phosphate + 2 H(+). Its function is as follows. Allows the formation of correctly charged Asn-tRNA(Asn) or Gln-tRNA(Gln) through the transamidation of misacylated Asp-tRNA(Asn) or Glu-tRNA(Gln) in organisms which lack either or both of asparaginyl-tRNA or glutaminyl-tRNA synthetases. The reaction takes place in the presence of glutamine and ATP through an activated phospho-Asp-tRNA(Asn) or phospho-Glu-tRNA(Gln). This is Aspartyl/glutamyl-tRNA(Asn/Gln) amidotransferase subunit B from Lactococcus lactis subsp. cremoris (strain SK11).